The chain runs to 267 residues: 4-hydroxy-tetrahydrodipicolinate reductase (267 aa).

Residues 8–13 (GAAGRM) and aspartate 34 contribute to the NAD(+) site. Arginine 35 contacts NADP(+). Residues 98-100 (GTT) and 122-125 (AANF) contribute to the NAD(+) site. Histidine 155 (proton donor/acceptor) is an active-site residue. Histidine 156 provides a ligand contact to (S)-2,3,4,5-tetrahydrodipicolinate. Catalysis depends on lysine 159, which acts as the Proton donor. Position 165-166 (165-166 (GT)) interacts with (S)-2,3,4,5-tetrahydrodipicolinate.

Belongs to the DapB family.

The protein localises to the cytoplasm. It catalyses the reaction (S)-2,3,4,5-tetrahydrodipicolinate + NAD(+) + H2O = (2S,4S)-4-hydroxy-2,3,4,5-tetrahydrodipicolinate + NADH + H(+). It carries out the reaction (S)-2,3,4,5-tetrahydrodipicolinate + NADP(+) + H2O = (2S,4S)-4-hydroxy-2,3,4,5-tetrahydrodipicolinate + NADPH + H(+). Its pathway is amino-acid biosynthesis; L-lysine biosynthesis via DAP pathway; (S)-tetrahydrodipicolinate from L-aspartate: step 4/4. Functionally, catalyzes the conversion of 4-hydroxy-tetrahydrodipicolinate (HTPA) to tetrahydrodipicolinate. The sequence is that of 4-hydroxy-tetrahydrodipicolinate reductase from Pseudomonas entomophila (strain L48).